A 366-amino-acid polypeptide reads, in one-letter code: 2-oxoglutarate synthase subunit KorA (366 aa).

Heterotetramer of the KorA, KorB, KorC and KorD subunits.

It carries out the reaction 2 oxidized [2Fe-2S]-[ferredoxin] + 2-oxoglutarate + CoA = succinyl-CoA + 2 reduced [2Fe-2S]-[ferredoxin] + CO2 + H(+). This Methanocaldococcus jannaschii (strain ATCC 43067 / DSM 2661 / JAL-1 / JCM 10045 / NBRC 100440) (Methanococcus jannaschii) protein is 2-oxoglutarate synthase subunit KorA (korA).